Here is an 83-residue protein sequence, read N- to C-terminus: Cell division topological specificity factor (83 aa).

It belongs to the MinE family.

Its function is as follows. Prevents the cell division inhibition by proteins MinC and MinD at internal division sites while permitting inhibition at polar sites. This ensures cell division at the proper site by restricting the formation of a division septum at the midpoint of the long axis of the cell. This chain is Cell division topological specificity factor, found in Buchnera aphidicola subsp. Baizongia pistaciae (strain Bp).